A 1790-amino-acid chain; its full sequence is Atrochrysone carboxylic acid synthase (1790 aa).

Positions 27 to 265 (RDLQDLFRQA…ALPVYGGLCH (239 aa)) are N-terminal acylcarrier protein transacylase domain (SAT). Residues 399-833 (QSKLAIVGMS…GGNTTMILED (435 aa)) form the Ketosynthase family 3 (KS3) domain. Residues Cys-572, His-708, and His-751 each act as for beta-ketoacyl synthase activity in the active site. A malonyl-CoA:ACP transacylase (MAT) domain region spans residues 934–1254 (FSFTGQGASH…IAQLYTVGVD (321 aa)). Positions 1323–1475 (QQIVEQVFDT…SLTHLVRDRI (153 aa)) are N-terminal hotdog fold. The PKS/mFAS DH domain occupies 1323-1634 (QQIVEQVFDT…FHRYRRILLE (312 aa)). Catalysis depends on His-1357, which acts as the Proton acceptor; for dehydratase activity. Residues 1357-1631 (HRMNDCGVAT…GIEFHRYRRI (275 aa)) are product template (PT) domain. The segment at 1487 to 1634 (ANRLSHNMAY…FHRYRRILLE (148 aa)) is C-terminal hotdog fold. Residue Asp-1545 is the Proton donor; for dehydratase activity of the active site. The tract at residues 1644–1667 (NLDDTTETKDISSSTQHSVPVSRQ) is disordered. Over residues 1654–1664 (ISSSTQHSVPV) the composition is skewed to polar residues. Positions 1715–1789 (SSITNRAMQL…DLRNWLEETY (75 aa)) constitute a Carrier domain. Ser-1749 is subject to O-(pantetheine 4'-phosphoryl)serine.

The catalysed reaction is holo-[ACP] + 8 malonyl-CoA + 8 H(+) = atrochrysone carboxyl-[ACP] + 8 CO2 + 8 CoA + 2 H2O. It participates in pigment biosynthesis. Non-reducing polyketide synthase; part of the gene cluster that mediates the biosynthesis of the bianthraquinone cladofulvin, a conidial pigment not required for virulence but that plays a role in fitness and resistance to environmental stresses including UV light and low-temperature stress. The pathway begins with the synthesis of atrochrysone thioester by the polyketide synthase (PKS) claG. The atrochrysone carboxyl ACP thioesterase claF then breaks the thioester bond and releases the atrochrysone carboxylic acid from claG. This compound is decarboxylated by claH to yield emodin, which is further converted to chrysophanol hydroquinone by the reductase claC and the dehydratase claB. The cytochrome P450 monooxygenase claM then catalyzes the dimerization of nataloe-emodin to cladofulvin. In Passalora fulva (Tomato leaf mold), this protein is Atrochrysone carboxylic acid synthase.